The sequence spans 1102 residues: Coiled-coil domain-containing protein AGAP005037 (1102 aa).

Basic and acidic residues predominate over residues 1–11; the sequence is MLIRWKSKDKS. 2 disordered regions span residues 1 to 69 and 295 to 318; these read MLIR…HTLG and HKSKQPTKTPYYVGTTQTLPRGMY. The segment covering 12–21 has biased composition (low complexity); the sequence is SSSTSSSSST. The span at 50–65 shows a compositional bias: basic and acidic residues; that stretch reads IDDRRRSARSREDPRR. The stretch at 405–430 forms a coiled coil; it reads HRIRVEHMERQLANLTGLVQKALTQN. 2 disordered regions span residues 450-475 and 489-539; these read RNAEATGDGTVCTREKPPKLGKSTCH and DIQG…PLVM. 2 coiled-coil regions span residues 554-579 and 614-654; these read EVYNQLRGLQKKAMDLRTEVRTLRRL and DKER…EVIN. Disordered stretches follow at residues 745-774, 832-958, and 1031-1087; these read LPIPDTAGTDETIKPPETHNNVNKPIPSPR, TKIS…CSDN, and LCGG…TLPP. Residues 832–849 show a composition bias toward polar residues; the sequence is TKISQSQLYPSEPVSSNV. The span at 867-881 shows a compositional bias: pro residues; that stretch reads PPQPTRPTTGKPPVP. Positions 904-918 are enriched in low complexity; that stretch reads TSSRSPLASPTSPHV. The segment covering 936–958 has biased composition (polar residues); that stretch reads DCEQQQRTSEGTDSGSESVCSDN.

In Anopheles gambiae (African malaria mosquito), this protein is Coiled-coil domain-containing protein AGAP005037.